A 319-amino-acid chain; its full sequence is Pantothenate kinase (319 aa).

101–108 (GSVAVGKS) lines the ATP pocket.

It belongs to the prokaryotic pantothenate kinase family.

It is found in the cytoplasm. It catalyses the reaction (R)-pantothenate + ATP = (R)-4'-phosphopantothenate + ADP + H(+). The protein operates within cofactor biosynthesis; coenzyme A biosynthesis; CoA from (R)-pantothenate: step 1/5. This is Pantothenate kinase from Clavibacter michiganensis subsp. michiganensis (strain NCPPB 382).